Consider the following 171-residue polypeptide: 3-hydroxydecanoyl-[acyl-carrier-protein] dehydratase (171 aa).

H70 is a catalytic residue.

The protein belongs to the thioester dehydratase family. FabA subfamily. As to quaternary structure, homodimer.

The protein localises to the cytoplasm. The enzyme catalyses a (3R)-hydroxyacyl-[ACP] = a (2E)-enoyl-[ACP] + H2O. The catalysed reaction is (3R)-hydroxydecanoyl-[ACP] = (2E)-decenoyl-[ACP] + H2O. It catalyses the reaction (2E)-decenoyl-[ACP] = (3Z)-decenoyl-[ACP]. It functions in the pathway lipid metabolism; fatty acid biosynthesis. Its function is as follows. Necessary for the introduction of cis unsaturation into fatty acids. Catalyzes the dehydration of (3R)-3-hydroxydecanoyl-ACP to E-(2)-decenoyl-ACP and then its isomerization to Z-(3)-decenoyl-ACP. Can catalyze the dehydratase reaction for beta-hydroxyacyl-ACPs with saturated chain lengths up to 16:0, being most active on intermediate chain length. In Pseudomonas putida (strain ATCC 700007 / DSM 6899 / JCM 31910 / BCRC 17059 / LMG 24140 / F1), this protein is 3-hydroxydecanoyl-[acyl-carrier-protein] dehydratase.